Reading from the N-terminus, the 244-residue chain is uncharacterized protein (244 aa).

The next 4 helical transmembrane spans lie at 20–42 (TITA…VVLI), 49–67 (FVYI…ATKV), 82–101 (TPSI…ASVF), and 108–125 (AFLV…ATPI).

Its subcellular location is the cell membrane. This is an uncharacterized protein from Archaeoglobus fulgidus (strain ATCC 49558 / DSM 4304 / JCM 9628 / NBRC 100126 / VC-16).